The chain runs to 581 residues: Threonine--tRNA ligase (581 aa).

The segment at 185–478 (DHRKLGKELD…LVEHYGGAFP (294 aa)) is catalytic. Zn(2+)-binding residues include Cys278, His329, and His455.

Belongs to the class-II aminoacyl-tRNA synthetase family. As to quaternary structure, homodimer. The cofactor is Zn(2+).

The protein resides in the cytoplasm. It catalyses the reaction tRNA(Thr) + L-threonine + ATP = L-threonyl-tRNA(Thr) + AMP + diphosphate + H(+). Catalyzes the attachment of threonine to tRNA(Thr) in a two-step reaction: L-threonine is first activated by ATP to form Thr-AMP and then transferred to the acceptor end of tRNA(Thr). Also edits incorrectly charged L-seryl-tRNA(Thr). The sequence is that of Threonine--tRNA ligase from Borreliella burgdorferi (strain ATCC 35210 / DSM 4680 / CIP 102532 / B31) (Borrelia burgdorferi).